A 359-amino-acid chain; its full sequence is Peptide chain release factor 1 (359 aa).

N5-methylglutamine is present on Gln-236.

This sequence belongs to the prokaryotic/mitochondrial release factor family. Post-translationally, methylated by PrmC. Methylation increases the termination efficiency of RF1.

The protein resides in the cytoplasm. In terms of biological role, peptide chain release factor 1 directs the termination of translation in response to the peptide chain termination codons UAG and UAA. The polypeptide is Peptide chain release factor 1 (prfA) (Mycoplasma genitalium (strain ATCC 33530 / DSM 19775 / NCTC 10195 / G37) (Mycoplasmoides genitalium)).